Here is a 510-residue protein sequence, read N- to C-terminus: NADH-quinone oxidoreductase subunit N (510 aa).

14 consecutive transmembrane segments (helical) span residues 14-34 (LLPEFIILGFATFLSLLDLFA), 42-62 (VIGWLSFLGTVIAAIFVIINM), 84-104 (AFKLIFLAGTAFAILISLSYL), 113-133 (GEYYYLLLTGLLGAMVMASSA), 135-155 (LITLFVGLELLSLSSYVLVGL), 170-190 (VVSGSIATAVLLFGMSYVYGL), 208-228 (MAGYQFLVYTAFAFLAVGLAF), 247-267 (PTPVTVFLAVVSKAAGFALIF), 286-306 (FFFEEGSLYLGLMAAASMIIG), 323-343 (SGIAQAGYLLVPFVPPTSLFF), 346-366 (VIFYLFGYLLVSFGAFAVIMV), 390-410 (AIAMSIFLLSLAGIPITVGFF), 426-446 (WLAAIMIITSVISYYYYFGII), and 466-486 (IWTFILIMAIATVFFGAFPGL).

This sequence belongs to the complex I subunit 2 family. NDH-1 is composed of 14 different subunits. Subunits NuoA, H, J, K, L, M, N constitute the membrane sector of the complex.

It is found in the cell membrane. The enzyme catalyses a quinone + NADH + 5 H(+)(in) = a quinol + NAD(+) + 4 H(+)(out). Its function is as follows. NDH-1 shuttles electrons from NADH, via FMN and iron-sulfur (Fe-S) centers, to quinones in the respiratory chain. The immediate electron acceptor for the enzyme in this species is believed to be a menaquinone. Couples the redox reaction to proton translocation (for every two electrons transferred, four hydrogen ions are translocated across the cytoplasmic membrane), and thus conserves the redox energy in a proton gradient. In Brevibacillus brevis (strain 47 / JCM 6285 / NBRC 100599), this protein is NADH-quinone oxidoreductase subunit N.